Reading from the N-terminus, the 217-residue chain is MSGGLAPSKSTVYVSNLPFSLTNNDLYRIFSKYGKVVKVTIMKDKDTRKSKGVAFILFLDKDSAQNCTRAINNKQLFGRVIKASIAIDNGRAAEFIRRRNYFDKSKCYECGESGHLSYACPKNMLGEREPPKKKEKKKKKKAPEPEEEIEEVEESEDEGEDPALDSLSQAIAFQQAKIEEEQKKWKPSSGVPSTSDDSRRPRIKKSTYFSDEEELSD.

The 79-residue stretch at 10-88 (STVYVSNLPF…RVIKASIAID (79 aa)) folds into the RRM domain. A CCHC-type zinc finger spans residues 105-122 (SKCYECGESGHLSYACPK). The interval 120–217 (CPKNMLGERE…YFSDEEELSD (98 aa)) is disordered. Acidic residues predominate over residues 145 to 163 (PEEEIEEVEESEDEGEDPA). Phosphoserine is present on residues serine 155, serine 210, and serine 216.

As to quaternary structure, component of the U11/U12 snRNPs that are part of the U12-type spliceosome.

The protein resides in the nucleus. The protein localises to the nucleoplasm. The sequence is that of Zinc finger CCHC-type and RNA-binding motif-containing protein 1 (ZCRB1) from Homo sapiens (Human).